The chain runs to 292 residues: Protein PHR1-LIKE 3 (292 aa).

An HTH myb-type domain is found at 34–94 (TDPKPRLRWT…HLQKFRLGRQ (61 aa)). A DNA-binding region (H-T-H motif) is located at residues 65–90 (PKTIMRTMGVKGLTLYHLKSHLQKFR). Positions 137–157 (TEALRAQMEVQRRLHEQLEVQ) form a coiled coil. The short motif at 150 to 155 (LHEQLE) is the LHEQLE element.

It belongs to the MYB-CC family. Homo- and heterodimers. Interacts with PHL2, but not with PHR1.

The protein resides in the nucleus. Its function is as follows. Transcriptional activator. Probable component of the central regulatory system controlling transcriptional responses to Pi starvation. Binds in a sequence-specific manner to phosphate starvation-regulated promoters. Required for female gametophyte development and function. This Arabidopsis thaliana (Mouse-ear cress) protein is Protein PHR1-LIKE 3.